A 453-amino-acid chain; its full sequence is Succinate-semialdehyde dehydrogenase (acetylating) (453 aa).

188-193 provides a ligand contact to NADP(+); sequence ATGGAG. Cys242 is a catalytic residue.

As to quaternary structure, homodimer.

It carries out the reaction succinate semialdehyde + NADP(+) + CoA = succinyl-CoA + NADPH + H(+). Its function is as follows. Catalyzes the reduction of succinate semialdehyde to succinyl-CoA. The enzyme is specific for succinate semialdehyde and succinyl-CoA, and only shows low activity with palmitoyl-CoA. There is no activity with NAD(+) as cosubstrate. In Clostridium kluyveri (strain ATCC 8527 / DSM 555 / NBRC 12016 / NCIMB 10680 / K1), this protein is Succinate-semialdehyde dehydrogenase (acetylating) (sucD).